The following is a 526-amino-acid chain: Tyrosine 2,3-aminomutase (526 aa).

The active-site Proton donor/acceptor is the Tyr41. His71 is a substrate binding site. A cross-link (5-imidazolinone (Ala-Gly)) is located at residues 130–132 (ASG). Ser131 bears the 2,3-didehydroalanine (Ser) mark. Residues Asn183 and Arg288 each coordinate substrate.

This sequence belongs to the TAL/TAM family. In terms of assembly, homotetramer; dimer of dimers. In terms of processing, contains an active site 4-methylidene-imidazol-5-one (MIO), which is formed autocatalytically by cyclization and dehydration of residues Ala-Ser-Gly.

The enzyme catalyses L-tyrosine = 3-amino-3-(4-hydroxyphenyl)propanoate. It carries out the reaction L-tyrosine = (E)-4-coumarate + NH4(+). In terms of biological role, has aminomutase and, to a much lesser extent, ammonia-lyase activity. Primarily, catalyzes the rearrangement of L-tyrosine to S-beta-tyrosine, which is probably incorporated into secondary metabolite myxovalargin. The aminomutase activity exclusively produces S-beta-tyrosine. The chain is Tyrosine 2,3-aminomutase from Myxococcus sp. (strain Mx-B0).